Reading from the N-terminus, the 477-residue chain is Probable glycine dehydrogenase (decarboxylating) subunit 2 (477 aa).

Lysine 264 carries the N6-(pyridoxal phosphate)lysine modification.

This sequence belongs to the GcvP family. C-terminal subunit subfamily. In terms of assembly, the glycine cleavage system is composed of four proteins: P, T, L and H. In this organism, the P 'protein' is a heterodimer of two subunits. Pyridoxal 5'-phosphate is required as a cofactor.

It carries out the reaction N(6)-[(R)-lipoyl]-L-lysyl-[glycine-cleavage complex H protein] + glycine + H(+) = N(6)-[(R)-S(8)-aminomethyldihydrolipoyl]-L-lysyl-[glycine-cleavage complex H protein] + CO2. Its function is as follows. The glycine cleavage system catalyzes the degradation of glycine. The P protein binds the alpha-amino group of glycine through its pyridoxal phosphate cofactor; CO(2) is released and the remaining methylamine moiety is then transferred to the lipoamide cofactor of the H protein. This Fervidobacterium nodosum (strain ATCC 35602 / DSM 5306 / Rt17-B1) protein is Probable glycine dehydrogenase (decarboxylating) subunit 2.